The following is a 206-amino-acid chain: Transmembrane 4 L6 family member 19 (206 aa).

The Cytoplasmic portion of the chain corresponds to 1–16; that stretch reads MLSFSRVVNCSRTCSR. A helical transmembrane segment spans residues 17–37; that stretch reads FLGLSLGTASLCAAGANIALL. Residues 38–54 lie on the Extracellular side of the membrane; the sequence is FPNWDVTYLMRGLIGKH. The helical transmembrane segment at 55–75 threads the bilayer; that stretch reads AMLGSGLWGGGLMVLLAATLI. The Cytoplasmic portion of the chain corresponds to 76 to 89; the sequence is SMTGSFSKSAPCLQ. A helical transmembrane segment spans residues 90 to 110; it reads VLIALLSSGLALLGAVICFVT. At 111-171 the chain is on the extracellular side; it reads SGVALKDGPF…PSKAVVWHVA (61 aa). N129 carries an N-linked (GlcNAc...) asparagine glycan. A helical transmembrane segment spans residues 172–192; the sequence is FFSILLCISLLQLLLVAIHLV. Residues 182–192 are important for homodimerization; sequence LQLLLVAIHLV. At 193–206 the chain is on the cytoplasmic side; sequence NSILGLFCSFCEKH.

This sequence belongs to the L6 tetraspanin family. May form homodimers and homooligomers. Interacts with integrins ITGAV and ITGB3. Interacts with components of members of the V0 complex of vacuolar(H+)-ATPase (V-ATPase), including ATP6V0B and ATP6V0D2; this interaction inhibits V1-V0 complex assembly. In terms of tissue distribution, predominantly expressed in osteoclasts (at protein level). Also expressed in white adipose tissue, as well as in bone marrow-derived macrophages.

It localises to the lysosome membrane. The protein resides in the cytoplasm. It is found in the cytoskeleton. The protein localises to the cell projection. Its subcellular location is the filopodium. Functionally, negatively regulates vacuolar (H+)-ATPase (V-ATPase) activity by interacting with members of V-ATPase V0 complex and hence inhibiting V1-V0 assembly. Required for multinucleation during osteoclast differentiation. The sequence is that of Transmembrane 4 L6 family member 19 (Tm4sf19) from Mus musculus (Mouse).